The chain runs to 304 residues: ATP synthase gamma chain (304 aa).

The protein belongs to the ATPase gamma chain family. As to quaternary structure, F-type ATPases have 2 components, CF(1) - the catalytic core - and CF(0) - the membrane proton channel. CF(1) has five subunits: alpha(3), beta(3), gamma(1), delta(1), epsilon(1). CF(0) has three main subunits: a, b and c.

It localises to the cell membrane. Functionally, produces ATP from ADP in the presence of a proton gradient across the membrane. The gamma chain is believed to be important in regulating ATPase activity and the flow of protons through the CF(0) complex. The chain is ATP synthase gamma chain from Thermobifida fusca (strain YX).